Consider the following 79-residue polypeptide: MHHQDRDQDQALAAVLAALLLVGGTLIVRELLGLWPAVAVGMAPALALYGGPPAARRIAVAVEVRRFRRHLAHHDRAAG.

This is an uncharacterized protein from Streptomyces lividans.